A 767-amino-acid polypeptide reads, in one-letter code: Pyrin (767 aa).

The Pyrin domain maps to 1–92 (MAKTLGDHLL…AEELRKATGT (92 aa)). A disordered region spans residues 94–219 (HLIEENRVGG…LQGLYNNAPG (126 aa)). Composition is skewed to polar residues over residues 126-142 (GTQQNNDESDTLPSSQA), 165-176 (LDSQTKPWTRST), and 183-208 (TQGTQSPGDKESTASAQLRRNVSSAG). At Ser241 the chain carries Phosphoserine. The tract at residues 311–346 (TSLIGEERCPTSWTENGNGSPETTESSGETAGSILS) is disordered. The span at 321-340 (TSWTENGNGSPETTESSGET) shows a compositional bias: polar residues. The segment at 439-481 (QSLPQCPRHMKQVLLLFCEDHREPICLICRLSLEHQGHRVRPI) adopts a B box-type zinc-finger fold. Zn(2+)-binding residues include Cys444, His447, Cys467, and His473. Residues 481 to 510 (IEEAALEYKEQIREQLERLREMRGYVEEHR) adopt a coiled-coil conformation. Positions 489-647 (KEQIREQLER…CFSEMLSSEM (159 aa)) are required for homotrimerization and induction of pyroptosomes. Residues 697 to 719 (GGSEPKDYLHPQPAQDTPELHEI) form a disordered region.

In terms of assembly, homotrimer. Interacts (via the B box-type zinc finger) with PSTPIP1. Interacts (via the B30.2/SPRY domain) with several components of the inflammasome complex, including CASP1 p20 and p10 subunits, CASP5, PYCARD, NLRP1, NLRP2 and NLRP3, as well as with unprocessed IL1B; this interaction may lead to autophagic degradation of these proteins. Component of the AIM2 PANoptosome complex, a multiprotein complex that drives inflammatory cell death (PANoptosis). Interacts with NFKBIA and RELA. Interacts weakly with VASP and ACTR3. Interacts with active ULK1 (phosphorylated on 'Ser-317') and BECN1 simultaneously. Also interacts with ATG16L1 (via WD repeats), and with ATG8 family members, including GABARAP, GABARAPL1 and, to a lesser extent, GABARAPL2, MAP1LC3A/LC3A and MAP1LC3C/LC3C. Interacts with TRIM21. Interacts with YWHAB, YWHAE, YWHAG, YWHAH, YWHAQ and YWHAZ; the interaction is required for the down-regulation of pyrin pro-inflammatory activity. Phosphorylation at Ser-241 is required for the interaction with 14-3-3 proteins and down-regulation of pyrin pro-inflammatory activity. In terms of processing, degraded along with the delivery of its substrates to autolysosomal compartments (at protein level). In terms of tissue distribution, expressed in spleen peripheral blood granulocytes. Not expressed in lymphocytes, thymus, testis, ovary, heart, brain, lung, liver, kidney and muscle.

It localises to the cytoplasm. It is found in the cytoskeleton. The protein resides in the cell projection. Its subcellular location is the ruffle. The protein localises to the lamellipodium. It localises to the cytoplasmic vesicle. It is found in the autophagosome. The protein resides in the nucleus. Its function is as follows. Involved in the regulation of innate immunity and the inflammatory response in response to IFNG/IFN-gamma. Organizes autophagic machinery by serving as a platform for the assembly of ULK1, Beclin 1/BECN1, ATG16L1, and ATG8 family members and recognizes specific autophagy targets, thus coordinating target recognition with assembly of the autophagic apparatus and initiation of autophagy. Acts as an autophagy receptor for the degradation of several inflammasome components, including CASP1, NLRP1 and NLRP3, hence preventing excessive IL1B- and IL18-mediated inflammation. However, it can also have a positive effect in the inflammatory pathway, acting as an innate immune sensor that triggers PYCARD/ASC specks formation, caspase-1 activation, and IL1B and IL18 production. Together with AIM2, also acts as a mediator of pyroptosis, necroptosis and apoptosis (PANoptosis), an integral part of host defense against pathogens, in response to bacterial infection. It is required for PSTPIP1-induced PYCARD/ASC oligomerization and inflammasome formation. Recruits PSTPIP1 to inflammasomes, and is required for PSTPIP1 oligomerization. The sequence is that of Pyrin from Mus musculus (Mouse).